A 774-amino-acid polypeptide reads, in one-letter code: Pentatricopeptide repeat-containing protein At4g20770 (774 aa).

PPR repeat units follow at residues 5–39, 40–70, 71–101, 102–136, 137–171, 172–203, 204–238, 239–270, 283–313, 314–348, 349–379, 380–414, 415–449, 450–480, 482–516, 518–552, 553–583, 584–618, 619–654, and 655–685; these read GNKY…GMKS, DTYL…MSVR, DVYS…MPER, DVVS…GFLP, SRFT…GLDK, NIFV…LSQP, NEVS…GVQV, DSVC…LGKQ, DLHL…MPEV, NVVS…GFQP, NEVT…IPQP, SVSA…NLKP, DKTT…EISK, NSHI…CINE, DIAC…AVLC, NETS…GYVS, DSFV…VLRK, NTVI…GEKP, DGIT…GIEP, and ELDH…TPYK. The type E motif stretch occupies residues 690–765; it reads LWEILLSSCR…TPGQSWTTYG (76 aa).

The protein belongs to the PPR family. PCMP-E subfamily.

The polypeptide is Pentatricopeptide repeat-containing protein At4g20770 (PCMP-E35) (Arabidopsis thaliana (Mouse-ear cress)).